We begin with the raw amino-acid sequence, 374 residues long: Dual-specificity RNA methyltransferase RlmN (374 aa).

E94 acts as the Proton acceptor in catalysis. The Radical SAM core domain maps to 100 to 339 (EEDRATLCVS…VTIRKTRGDD (240 aa)). The cysteines at positions 107 and 344 are disulfide-linked. Positions 114, 118, and 121 each coordinate [4Fe-4S] cluster. S-adenosyl-L-methionine-binding positions include 168–169 (GE), S200, 222–224 (SLH), and N301. C344 (S-methylcysteine intermediate) is an active-site residue.

This sequence belongs to the radical SAM superfamily. RlmN family. Requires [4Fe-4S] cluster as cofactor.

It is found in the cytoplasm. The catalysed reaction is adenosine(2503) in 23S rRNA + 2 reduced [2Fe-2S]-[ferredoxin] + 2 S-adenosyl-L-methionine = 2-methyladenosine(2503) in 23S rRNA + 5'-deoxyadenosine + L-methionine + 2 oxidized [2Fe-2S]-[ferredoxin] + S-adenosyl-L-homocysteine. It catalyses the reaction adenosine(37) in tRNA + 2 reduced [2Fe-2S]-[ferredoxin] + 2 S-adenosyl-L-methionine = 2-methyladenosine(37) in tRNA + 5'-deoxyadenosine + L-methionine + 2 oxidized [2Fe-2S]-[ferredoxin] + S-adenosyl-L-homocysteine. Its function is as follows. Specifically methylates position 2 of adenine 2503 in 23S rRNA and position 2 of adenine 37 in tRNAs. m2A2503 modification seems to play a crucial role in the proofreading step occurring at the peptidyl transferase center and thus would serve to optimize ribosomal fidelity. The polypeptide is Dual-specificity RNA methyltransferase RlmN (Vibrio vulnificus (strain CMCP6)).